The following is a 267-amino-acid chain: Exodeoxyribonuclease III (267 aa).

A Mg(2+)-binding site is contributed by Glu-34. Tyr-109 is a catalytic residue. Residues Asp-151, Asn-153, and Asp-258 each contribute to the Mg(2+) site. Asp-151 (proton donor/acceptor) is an active-site residue.

The protein belongs to the DNA repair enzymes AP/ExoA family. In terms of assembly, monomer. The cofactor is Mg(2+). Mn(2+) is required as a cofactor.

It catalyses the reaction Exonucleolytic cleavage in the 3'- to 5'-direction to yield nucleoside 5'-phosphates.. In terms of biological role, major apurinic-apyrimidinic endonuclease of E.coli. It removes the damaged DNA at cytosines and guanines by cleaving on the 3'-side of the AP site by a beta-elimination reaction. This Haemophilus influenzae (strain ATCC 51907 / DSM 11121 / KW20 / Rd) protein is Exodeoxyribonuclease III (xthA).